The following is a 249-amino-acid chain: tRNA pseudouridine synthase A (249 aa).

The Nucleophile role is filled by D52. Residue Y110 coordinates substrate.

It belongs to the tRNA pseudouridine synthase TruA family. As to quaternary structure, homodimer.

It carries out the reaction uridine(38/39/40) in tRNA = pseudouridine(38/39/40) in tRNA. Functionally, formation of pseudouridine at positions 38, 39 and 40 in the anticodon stem and loop of transfer RNAs. This chain is tRNA pseudouridine synthase A, found in Exiguobacterium sibiricum (strain DSM 17290 / CCUG 55495 / CIP 109462 / JCM 13490 / 255-15).